Consider the following 430-residue polypeptide: Gamma-glutamyl phosphate reductase (430 aa).

This sequence belongs to the gamma-glutamyl phosphate reductase family.

It localises to the cytoplasm. It catalyses the reaction L-glutamate 5-semialdehyde + phosphate + NADP(+) = L-glutamyl 5-phosphate + NADPH + H(+). Its pathway is amino-acid biosynthesis; L-proline biosynthesis; L-glutamate 5-semialdehyde from L-glutamate: step 2/2. Functionally, catalyzes the NADPH-dependent reduction of L-glutamate 5-phosphate into L-glutamate 5-semialdehyde and phosphate. The product spontaneously undergoes cyclization to form 1-pyrroline-5-carboxylate. The sequence is that of Gamma-glutamyl phosphate reductase from Rhodopseudomonas palustris (strain ATCC BAA-98 / CGA009).